A 293-amino-acid chain; its full sequence is Phycoerythrin class 2 subunit gamma, linker polypeptide (293 aa).

C49 is a binding site for phycourobilin. The PBS-linker domain maps to 50–229 (AAMGIGIGPR…LGGMKVAISD (180 aa)).

Contains one covalently linked phycourobilin chromophore.

Its subcellular location is the cellular thylakoid membrane. This protein is a bile pigment-bearing rod linker polypeptide that associates with C-phycoerythrin. This is Phycoerythrin class 2 subunit gamma, linker polypeptide (mpeC) from Synechococcus sp. (strain WH8020).